The following is a 308-amino-acid chain: UDP-N-acetylenolpyruvoylglucosamine reductase (308 aa).

One can recognise an FAD-binding PCMH-type domain in the interval 24–187; it reads RVGGPADWLF…VSASLQGVPG (164 aa). Residue Arg167 is part of the active site. The interval 199–230 is disordered; it reads QLDKRDQTQPTKERSAGSTFRNPAGFSSTGRA. The segment covering 200 to 213 has biased composition (basic and acidic residues); sequence LDKRDQTQPTKERS. A compositionally biased stretch (polar residues) spans 214 to 228; it reads AGSTFRNPAGFSSTG. The active-site Proton donor is the Ser216. Residue Glu298 is part of the active site.

Belongs to the MurB family. Requires FAD as cofactor.

It is found in the cytoplasm. It catalyses the reaction UDP-N-acetyl-alpha-D-muramate + NADP(+) = UDP-N-acetyl-3-O-(1-carboxyvinyl)-alpha-D-glucosamine + NADPH + H(+). The protein operates within cell wall biogenesis; peptidoglycan biosynthesis. Its function is as follows. Cell wall formation. The chain is UDP-N-acetylenolpyruvoylglucosamine reductase from Ruegeria pomeroyi (strain ATCC 700808 / DSM 15171 / DSS-3) (Silicibacter pomeroyi).